Consider the following 300-residue polypeptide: Free fatty acid receptor 1 (300 aa).

Over 1–8 the chain is Extracellular; the sequence is MDLPPQLS. Residues 9-31 traverse the membrane as a helical segment; that stretch reads FALYVSAFALGFPLNLLAIRGAV. Residues 32–41 lie on the Cytoplasmic side of the membrane; sequence SHAKLRLTPS. Residues 42–64 form a helical membrane-spanning segment; sequence LVYTLHLACSDLLLAITLPLKAV. At 65–79 the chain is on the extracellular side; sequence EALASGVWPLPLPFC. Cys-79 and Cys-170 are disulfide-bonded. The helical transmembrane segment at 80–101 threads the bilayer; the sequence is PVFALAHFAPLYAGGGFLAALS. Residues 102–121 lie on the Cytoplasmic side of the membrane; the sequence is AGRYLGAAFPFGYQAIRRPC. Residues 122-142 traverse the membrane as a helical segment; the sequence is YSWGVCVAIWALVLCHLGLAL. Residues 143–178 lie on the Extracellular side of the membrane; that stretch reads GLEAPRGWVDNTTSSLGINIPVNGSPVCLEAWDPDS. N-linked (GlcNAc...) asparagine glycosylation occurs at Asn-153. A helical membrane pass occupies residues 179–200; it reads ARPARLSFSILLFFLPLVITAF. At 201–223 the chain is on the cytoplasmic side; sequence CYVGCLRALVHSGLSHKRKLRAA. The helical transmembrane segment at 224–248 threads the bilayer; the sequence is WVAGGALLTLLLCLGPYNASNVASF. Over 249 to 256 the chain is Extracellular; the sequence is INPDLEGS. Residues 257-279 form a helical membrane-spanning segment; the sequence is WRKLGLITGAWSVVLNPLVTGYL. Residues 280–300 lie on the Cytoplasmic side of the membrane; the sequence is GTGPGQGTICVTRTPRGTIQK.

This sequence belongs to the G-protein coupled receptor 1 family. As to expression, expressed abundantly in pancreatic beta cells.

It localises to the cell membrane. Its function is as follows. G-protein coupled receptor for medium and long chain saturated and unsaturated fatty acids that plays an important role in glucose homeostasis. Fatty acid binding increases glucose-stimulated insulin secretion, and may also enhance the secretion of glucagon-like peptide 1 (GLP-1). May also play a role in bone homeostasis; receptor signaling activates pathways that inhibit osteoclast differentiation. Ligand binding leads to a conformation change that triggers signaling via G-proteins that activate phospholipase C, leading to an increase of the intracellular calcium concentration. Seems to act through a G(q) and G(i)-mediated pathway. Mediates the anti-inflammatory effects of omega-3 polyunsaturated fatty acids (PUFAs) via inhibition of NLRP3 inflammasome activation. This is Free fatty acid receptor 1 (Ffar1) from Rattus norvegicus (Rat).